Reading from the N-terminus, the 93-residue chain is Small ribosomal subunit protein uS19 (93 aa).

The disordered stretch occupies residues 1–23; that stretch reads MPRSLKKGPFVDDHLQKKVDAEN. The segment covering 9–23 has biased composition (basic and acidic residues); the sequence is PFVDDHLQKKVDAEN.

The protein belongs to the universal ribosomal protein uS19 family.

Its function is as follows. Protein S19 forms a complex with S13 that binds strongly to the 16S ribosomal RNA. The chain is Small ribosomal subunit protein uS19 from Nocardioides sp. (strain ATCC BAA-499 / JS614).